The sequence spans 242 residues: MNITVLTLFPEMFTALNHSIVARAQEEKRIELNYVNFRDYSTNRHGRVDDSPYGGGAGMLLMPQPIFDAIADLPEAKRRIIALTPTGRRFDQRLAEEWSKETDLVFLCGHYEGFDQRVHDELVTDEVSLGDFVLTGGELAAMTMIDATVRLLPDVLGKAASHEDDSFSTGLLEYPHYTRPADFRGLTVPEVLLSGNHARIETWRREQALRRTLERRPDLLETADLSETDRRYLQSISGLSND.

S-adenosyl-L-methionine contacts are provided by residues Gly109 and 129-134; that span reads LGDFVL.

This sequence belongs to the RNA methyltransferase TrmD family. Homodimer.

It localises to the cytoplasm. The catalysed reaction is guanosine(37) in tRNA + S-adenosyl-L-methionine = N(1)-methylguanosine(37) in tRNA + S-adenosyl-L-homocysteine + H(+). Its function is as follows. Specifically methylates guanosine-37 in various tRNAs. The polypeptide is tRNA (guanine-N(1)-)-methyltransferase (Exiguobacterium sibiricum (strain DSM 17290 / CCUG 55495 / CIP 109462 / JCM 13490 / 255-15)).